Reading from the N-terminus, the 46-residue chain is GTP cyclohydrolase 1 (46 aa).

Cys-7 lines the Zn(2+) pocket.

It belongs to the GTP cyclohydrolase I family. Homomer.

It carries out the reaction GTP + H2O = 7,8-dihydroneopterin 3'-triphosphate + formate + H(+). It participates in cofactor biosynthesis; 7,8-dihydroneopterin triphosphate biosynthesis; 7,8-dihydroneopterin triphosphate from GTP: step 1/1. This is GTP cyclohydrolase 1 (folE) from Bacillus pumilus (Bacillus mesentericus).